Here is a 693-residue protein sequence, read N- to C-terminus: Elongation factor G (693 aa).

The region spanning K6 to I286 is the tr-type G domain. GTP-binding positions include A15 to T22, D83 to H87, and N137 to D140.

This sequence belongs to the TRAFAC class translation factor GTPase superfamily. Classic translation factor GTPase family. EF-G/EF-2 subfamily.

The protein resides in the cytoplasm. Catalyzes the GTP-dependent ribosomal translocation step during translation elongation. During this step, the ribosome changes from the pre-translocational (PRE) to the post-translocational (POST) state as the newly formed A-site-bound peptidyl-tRNA and P-site-bound deacylated tRNA move to the P and E sites, respectively. Catalyzes the coordinated movement of the two tRNA molecules, the mRNA and conformational changes in the ribosome. The polypeptide is Elongation factor G (Karelsulcia muelleri (strain GWSS) (Sulcia muelleri)).